A 444-amino-acid chain; its full sequence is N-succinylarginine dihydrolase (444 aa).

Substrate is bound by residues 19–28 (SGLSFGNVAS), Asn110, and 137–138 (HR). Glu174 is an active-site residue. Arg214 provides a ligand contact to substrate. His250 is an active-site residue. Substrate is bound by residues Asp252 and Asn362. Residue Cys368 is the Nucleophile of the active site.

This sequence belongs to the succinylarginine dihydrolase family. In terms of assembly, homodimer.

It catalyses the reaction N(2)-succinyl-L-arginine + 2 H2O + 2 H(+) = N(2)-succinyl-L-ornithine + 2 NH4(+) + CO2. It functions in the pathway amino-acid degradation; L-arginine degradation via AST pathway; L-glutamate and succinate from L-arginine: step 2/5. Functionally, catalyzes the hydrolysis of N(2)-succinylarginine into N(2)-succinylornithine, ammonia and CO(2). The sequence is that of N-succinylarginine dihydrolase from Photobacterium profundum (strain SS9).